Reading from the N-terminus, the 251-residue chain is Ubiquinone/menaquinone biosynthesis C-methyltransferase UbiE (251 aa).

S-adenosyl-L-methionine-binding positions include T74, D95, and N123–A124.

The protein belongs to the class I-like SAM-binding methyltransferase superfamily. MenG/UbiE family.

It catalyses the reaction a 2-demethylmenaquinol + S-adenosyl-L-methionine = a menaquinol + S-adenosyl-L-homocysteine + H(+). The enzyme catalyses a 2-methoxy-6-(all-trans-polyprenyl)benzene-1,4-diol + S-adenosyl-L-methionine = a 5-methoxy-2-methyl-3-(all-trans-polyprenyl)benzene-1,4-diol + S-adenosyl-L-homocysteine + H(+). Its pathway is quinol/quinone metabolism; menaquinone biosynthesis; menaquinol from 1,4-dihydroxy-2-naphthoate: step 2/2. It functions in the pathway cofactor biosynthesis; ubiquinone biosynthesis. Functionally, methyltransferase required for the conversion of demethylmenaquinol (DMKH2) to menaquinol (MKH2) and the conversion of 2-polyprenyl-6-methoxy-1,4-benzoquinol (DDMQH2) to 2-polyprenyl-3-methyl-6-methoxy-1,4-benzoquinol (DMQH2). This is Ubiquinone/menaquinone biosynthesis C-methyltransferase UbiE from Edwardsiella ictaluri (strain 93-146).